An 82-amino-acid polypeptide reads, in one-letter code: Cytochrome c oxidase-assembly factor cox-23, mitochondrial (82 aa).

The segment at 1–27 (MAQAGSENKEPWNEETRAKFEGKSRSE) is disordered. A compositionally biased stretch (basic and acidic residues) spans 7–27 (ENKEPWNEETRAKFEGKSRSE). Residues 29-71 (LDPCQEAAQRSIRCLHRNQGDRTMCSDYFEAYRECKKQWIERR) form the CHCH domain. 2 short sequence motifs (cx9C motif) span residues 32 to 42 (CQEAAQRSIRC) and 53 to 63 (CSDYFEAYREC). Intrachain disulfides connect Cys-32-Cys-63 and Cys-42-Cys-53.

It belongs to the COX23 family.

The protein localises to the mitochondrion intermembrane space. Its function is as follows. Required for the assembly of cytochrome c oxidase. This Neurospora crassa (strain ATCC 24698 / 74-OR23-1A / CBS 708.71 / DSM 1257 / FGSC 987) protein is Cytochrome c oxidase-assembly factor cox-23, mitochondrial (cox-23).